Reading from the N-terminus, the 366-residue chain is Trans-enoyl reductase caaB (366 aa).

Residues 19 to 363 (GAGQLSIYHD…RQTVSGHKLV (345 aa)) form the Enoyl reductase (ER) domain. Y219 contacts NADP(+).

Belongs to the zinc-containing alcohol dehydrogenase family. Monomer.

Its pathway is secondary metabolite biosynthesis. In terms of biological role, trans-enoyl reductase; part of the gene cluster that produces the acyltetronic acid derivatives carlosic acid, agglomerin F and carlosic acid methyl ether. The PKS domains of caaA condenses two malonyl-CoAs into an acetyl starter unit, and form 1,3-diketohexanyl-ACP with the help of the trans-enoyl reductase caaB. Next, the C domain of caaA forms the ester bond between the acyl chain and L-malic acid (derived from the TCA cycle) and accepted by the A domain instead of an amino acid. Finally, the terminal reductase/Dieckmann cyclization (R/DKC) domain cyclizes the intermediate and releases the product as carlosic acid. Decarboxylation of carlosic acid followed by formation of the exocyclic double bond is likely to be catalyzed by the cytochrome P450 monooxygenase caaC. Thus, decarboxylation and oxidation would be coupled (performed by one enzyme) through concomitant abstraction of the hydrogen at C-4. Finally, sequential oxidations of the terminal C-10 methyl group to form carboxylic acid would be catalyzed by the 2-oxoglutarate-dependent dioxygenase caaD, which is required for the biosynthesis of agglomerin F. The chain is Trans-enoyl reductase caaB from Aspergillus niger (strain ATCC MYA-4892 / CBS 513.88 / FGSC A1513).